Reading from the N-terminus, the 434-residue chain is Enolase (434 aa).

A (2R)-2-phosphoglycerate-binding site is contributed by Gln-163. The active-site Proton donor is Glu-205. The Mg(2+) site is built by Asp-242, Glu-291, and Asp-318. Residues Lys-343, Arg-372, Ser-373, and Lys-394 each coordinate (2R)-2-phosphoglycerate. Lys-343 serves as the catalytic Proton acceptor.

It belongs to the enolase family. Mg(2+) is required as a cofactor.

The protein localises to the cytoplasm. The protein resides in the secreted. It is found in the cell surface. It carries out the reaction (2R)-2-phosphoglycerate = phosphoenolpyruvate + H2O. It functions in the pathway carbohydrate degradation; glycolysis; pyruvate from D-glyceraldehyde 3-phosphate: step 4/5. Its function is as follows. Catalyzes the reversible conversion of 2-phosphoglycerate (2-PG) into phosphoenolpyruvate (PEP). It is essential for the degradation of carbohydrates via glycolysis. The polypeptide is Enolase (Streptococcus thermophilus (strain CNRZ 1066)).